Here is a 36-residue protein sequence, read N- to C-terminus: Photosystem II reaction center protein Y (36 aa).

Residues 1–4 (MDTR) lie on the Lumenal side of the membrane. The chain crosses the membrane as a helical span at residues 5–23 (LLVIAAPVLVAASWALFNI). Topologically, residues 24-36 (GRLAIQQIQRLSR) are stromal.

It belongs to the PsbY family. In terms of assembly, PSII is composed of 1 copy each of membrane proteins PsbA, PsbB, PsbC, PsbD, PsbE, PsbF, PsbH, PsbI, PsbJ, PsbK, PsbL, PsbM, PsbT, PsbX, PsbY, PsbZ, Psb30/Ycf12, at least 3 peripheral proteins of the oxygen-evolving complex and a large number of cofactors. It forms dimeric complexes.

It localises to the plastid. Its subcellular location is the chloroplast thylakoid membrane. Loosely associated component of the core of photosystem II (PSII), it is not always seen in crystals. PSII is a light-driven water plastoquinone oxidoreductase, using light energy to abstract electrons from H(2)O, generating a proton gradient subsequently used for ATP formation. The sequence is that of Photosystem II reaction center protein Y from Thalassiosira pseudonana (Marine diatom).